A 243-amino-acid chain; its full sequence is Glucosamine-6-phosphate deaminase (243 aa).

D67 functions as the Proton acceptor; for enolization step in the catalytic mechanism. The active-site For ring-opening step is the N137. Catalysis depends on H139, which acts as the Proton acceptor; for ring-opening step. The active-site For ring-opening step is E144.

Belongs to the glucosamine/galactosamine-6-phosphate isomerase family. NagB subfamily.

The enzyme catalyses alpha-D-glucosamine 6-phosphate + H2O = beta-D-fructose 6-phosphate + NH4(+). The protein operates within amino-sugar metabolism; N-acetylneuraminate degradation; D-fructose 6-phosphate from N-acetylneuraminate: step 5/5. Catalyzes the reversible isomerization-deamination of glucosamine 6-phosphate (GlcN6P) to form fructose 6-phosphate (Fru6P) and ammonium ion. This Staphylococcus epidermidis (strain ATCC 12228 / FDA PCI 1200) protein is Glucosamine-6-phosphate deaminase.